The chain runs to 340 residues: Putative pyridoxal kinase C18.10 (340 aa).

Positions 19 and 130 each coordinate substrate. Residues 189–190 and 218–230 each bind ATP; these read TS and QFPSLSGVFTGTG. Asp-231 is a substrate binding site.

It belongs to the pyridoxine kinase family. The cofactor is a divalent metal cation.

It is found in the cytoplasm. Its subcellular location is the nucleus. The catalysed reaction is pyridoxal + ATP = pyridoxal 5'-phosphate + ADP + H(+). Its function is as follows. Required for synthesis of pyridoxal-5-phosphate from vitamin B6. This chain is Putative pyridoxal kinase C18.10, found in Schizosaccharomyces pombe (strain 972 / ATCC 24843) (Fission yeast).